The sequence spans 176 residues: Translation initiation factor IF-3 (176 aa).

This sequence belongs to the IF-3 family. Monomer.

Its subcellular location is the cytoplasm. IF-3 binds to the 30S ribosomal subunit and shifts the equilibrium between 70S ribosomes and their 50S and 30S subunits in favor of the free subunits, thus enhancing the availability of 30S subunits on which protein synthesis initiation begins. The chain is Translation initiation factor IF-3 from Nitratidesulfovibrio vulgaris (strain ATCC 29579 / DSM 644 / CCUG 34227 / NCIMB 8303 / VKM B-1760 / Hildenborough) (Desulfovibrio vulgaris).